The primary structure comprises 298 residues: MTSTFRHVALIGKYHAPSASAPSENASNALERIADFLRRQGCEVVLDTQSALHAGLTDYPTLDVDGLGRHCDLGLVVGGDGTMLGVSRHLAQYGTPLIGVNQGRLGFVTDIALEDFEATLTPMLQGEYEEDLRPLMCARVIRDGQCVFEALAMNDVVVNRGGTSGMVELRIEVGGRFVSNQRADGLIVATPTGSTAYALSAGGPMMHPSIPAWVMAPIAPHNLSNRPIVLSDANEVTIEVVAGRDVSANFDMQSLASLQHGDRILVSRAHHSVRFLHPKGWNYFATLRKKLGWNEGGA.

Asp-80 acts as the Proton acceptor in catalysis. NAD(+)-binding positions include 80-81 (DG), 154-155 (ND), Arg-182, Asp-184, 195-200 (TAYALS), Ala-219, and Gln-253.

This sequence belongs to the NAD kinase family. It depends on a divalent metal cation as a cofactor.

It localises to the cytoplasm. The catalysed reaction is NAD(+) + ATP = ADP + NADP(+) + H(+). Involved in the regulation of the intracellular balance of NAD and NADP, and is a key enzyme in the biosynthesis of NADP. Catalyzes specifically the phosphorylation on 2'-hydroxyl of the adenosine moiety of NAD to yield NADP. The sequence is that of NAD kinase from Delftia acidovorans (strain DSM 14801 / SPH-1).